The primary structure comprises 270 residues: 4-hydroxy-tetrahydrodipicolinate reductase (270 aa).

NAD(+) contacts are provided by residues 11-16 and glutamate 37; that span reads GASGRM. Arginine 38 serves as a coordination point for NADP(+). NAD(+) is bound by residues 101 to 103 and 125 to 128; these read GTT and APNM. Histidine 158 serves as the catalytic Proton donor/acceptor. Histidine 159 is a (S)-2,3,4,5-tetrahydrodipicolinate binding site. Lysine 162 (proton donor) is an active-site residue. 168 to 169 lines the (S)-2,3,4,5-tetrahydrodipicolinate pocket; that stretch reads GT.

Belongs to the DapB family.

The protein resides in the cytoplasm. It carries out the reaction (S)-2,3,4,5-tetrahydrodipicolinate + NAD(+) + H2O = (2S,4S)-4-hydroxy-2,3,4,5-tetrahydrodipicolinate + NADH + H(+). It catalyses the reaction (S)-2,3,4,5-tetrahydrodipicolinate + NADP(+) + H2O = (2S,4S)-4-hydroxy-2,3,4,5-tetrahydrodipicolinate + NADPH + H(+). Its pathway is amino-acid biosynthesis; L-lysine biosynthesis via DAP pathway; (S)-tetrahydrodipicolinate from L-aspartate: step 4/4. Its function is as follows. Catalyzes the conversion of 4-hydroxy-tetrahydrodipicolinate (HTPA) to tetrahydrodipicolinate. The sequence is that of 4-hydroxy-tetrahydrodipicolinate reductase from Shewanella frigidimarina (strain NCIMB 400).